Reading from the N-terminus, the 323-residue chain is tRNA U34 carboxymethyltransferase (323 aa).

Residues Lys91, Trp105, Lys110, Gly130, 152–154 (DPT), 181–182 (IE), Met196, Tyr200, and Arg315 each bind carboxy-S-adenosyl-L-methionine.

The protein belongs to the class I-like SAM-binding methyltransferase superfamily. CmoB family. As to quaternary structure, homotetramer.

The catalysed reaction is carboxy-S-adenosyl-L-methionine + 5-hydroxyuridine(34) in tRNA = 5-carboxymethoxyuridine(34) in tRNA + S-adenosyl-L-homocysteine + H(+). In terms of biological role, catalyzes carboxymethyl transfer from carboxy-S-adenosyl-L-methionine (Cx-SAM) to 5-hydroxyuridine (ho5U) to form 5-carboxymethoxyuridine (cmo5U) at position 34 in tRNAs. This Shigella dysenteriae serotype 1 (strain Sd197) protein is tRNA U34 carboxymethyltransferase.